The sequence spans 236 residues: Uridylate kinase (236 aa).

10–13 (KLSG) contributes to the ATP binding site. Glycine 52 lines the UMP pocket. Positions 53 and 57 each coordinate ATP. UMP is bound by residues aspartate 72 and 133–140 (TGNPFFTT). Residues threonine 160, tyrosine 166, and aspartate 169 each contribute to the ATP site.

The protein belongs to the UMP kinase family. As to quaternary structure, homohexamer.

Its subcellular location is the cytoplasm. The enzyme catalyses UMP + ATP = UDP + ADP. It participates in pyrimidine metabolism; CTP biosynthesis via de novo pathway; UDP from UMP (UMPK route): step 1/1. Its activity is regulated as follows. Inhibited by UTP. In terms of biological role, catalyzes the reversible phosphorylation of UMP to UDP. The chain is Uridylate kinase from Cupriavidus pinatubonensis (strain JMP 134 / LMG 1197) (Cupriavidus necator (strain JMP 134)).